A 410-amino-acid polypeptide reads, in one-letter code: Putative competence-damage inducible protein (410 aa).

It belongs to the CinA family.

The sequence is that of Putative competence-damage inducible protein from Finegoldia magna (strain ATCC 29328 / DSM 20472 / WAL 2508) (Peptostreptococcus magnus).